Consider the following 223-residue polypeptide: Triosephosphate isomerase (223 aa).

Position 6–8 (6–8) interacts with substrate; the sequence is NLK. The active-site Electrophile is histidine 86. The Proton acceptor role is filled by glutamate 151. Substrate-binding residues include glycine 157 and serine 187.

The protein belongs to the triosephosphate isomerase family. Homodimer.

Its subcellular location is the cytoplasm. The enzyme catalyses D-glyceraldehyde 3-phosphate = dihydroxyacetone phosphate. It functions in the pathway carbohydrate biosynthesis; gluconeogenesis. The protein operates within carbohydrate degradation; glycolysis; D-glyceraldehyde 3-phosphate from glycerone phosphate: step 1/1. Functionally, involved in the gluconeogenesis. Catalyzes stereospecifically the conversion of dihydroxyacetone phosphate (DHAP) to D-glyceraldehyde-3-phosphate (G3P). The sequence is that of Triosephosphate isomerase from Campylobacter jejuni subsp. doylei (strain ATCC BAA-1458 / RM4099 / 269.97).